A 140-amino-acid polypeptide reads, in one-letter code: Transcription antitermination protein NusB (140 aa).

It belongs to the NusB family.

Its function is as follows. Involved in transcription antitermination. Required for transcription of ribosomal RNA (rRNA) genes. Binds specifically to the boxA antiterminator sequence of the ribosomal RNA (rrn) operons. The chain is Transcription antitermination protein NusB from Pseudothermotoga lettingae (strain ATCC BAA-301 / DSM 14385 / NBRC 107922 / TMO) (Thermotoga lettingae).